The primary structure comprises 213 residues: Large ribosomal subunit protein uL3 (213 aa).

The segment at 131-168 (GPMSHGSKNHRLPGSTGAGTTPGRVYPGKRMAGRSGND) is disordered.

The protein belongs to the universal ribosomal protein uL3 family. Part of the 50S ribosomal subunit. Forms a cluster with proteins L14 and L19.

In terms of biological role, one of the primary rRNA binding proteins, it binds directly near the 3'-end of the 23S rRNA, where it nucleates assembly of the 50S subunit. In Synechococcus elongatus (strain ATCC 33912 / PCC 7942 / FACHB-805) (Anacystis nidulans R2), this protein is Large ribosomal subunit protein uL3.